A 324-amino-acid polypeptide reads, in one-letter code: Fructose-1,6-bisphosphatase class 1 (324 aa).

Positions 88, 107, 109, and 110 each coordinate Mg(2+). Substrate-binding positions include 110-113, Asn199, and Lys265; that span reads DGSS. Glu271 is a binding site for Mg(2+).

The protein belongs to the FBPase class 1 family. As to quaternary structure, homotetramer. It depends on Mg(2+) as a cofactor.

It localises to the cytoplasm. The catalysed reaction is beta-D-fructose 1,6-bisphosphate + H2O = beta-D-fructose 6-phosphate + phosphate. Its pathway is carbohydrate biosynthesis; gluconeogenesis. The chain is Fructose-1,6-bisphosphatase class 1 from Neisseria meningitidis serogroup C (strain 053442).